A 672-amino-acid chain; its full sequence is Inner kinetochore subunit mis6 (672 aa).

It belongs to the CENP-I/CTF3 family. In terms of assembly, component of the inner kinetochore constitutive centromere-associated network (CCAN) (also known as central kinetochore Sim4 complex in fission yeast), which is composed of at least cnl2, cnp3, cnp20, fta1, fta2, fta3, fta4, fta6, fta7, mal2, mhf1, mhf2, mis6, mis15, mis17, sim4 and wip1. Interacts with cnp1, sim4, mis15 and mis17.

The protein resides in the nucleus. It localises to the chromosome. It is found in the centromere. Component of the kinetochore, a multiprotein complex that assembles on centromeric DNA and attaches chromosomes to spindle microtubules, mediating chromosome segregation and sister chromatid segregation during meiosis and mitosis. Component of the inner kinetochore constitutive centromere-associated network (CCAN), which serves as a structural platform for outer kinetochore assembly. Required for the localization of cnp1 to the centromere. In Schizosaccharomyces pombe (strain 972 / ATCC 24843) (Fission yeast), this protein is Inner kinetochore subunit mis6 (mis6).